The sequence spans 152 residues: Coiled-coil domain-containing protein 182 (152 aa).

Residues 46–109 (ADLEILQQKV…RLREEEDRGI (64 aa)) adopt a coiled-coil conformation.

The chain is Coiled-coil domain-containing protein 182 (Ccdc182) from Mus musculus (Mouse).